Consider the following 666-residue polypeptide: Neopullulanase 1 (666 aa).

The first 29 residues, 1 to 29 (MIKLLKPMSLSILLVFILSFSFPFPTAKA), serve as a signal peptide directing secretion. Residues Ala-31, Asp-33, Asn-35, Asp-71, Asp-125, Asn-174, Asp-176, Asn-179, Asp-180, Gly-216, and Asp-218 each contribute to the Ca(2+) site. Position 296 (His-296) interacts with substrate. Positions 305, 309, 310, 312, and 317 each coordinate Ca(2+). Arg-383 serves as a coordination point for substrate. Catalysis depends on Asp-385, which acts as the Nucleophile. Residue Glu-425 is the Proton donor of the active site. Substrate-binding positions include 500-501 (HD), Asp-545, and Arg-549.

Belongs to the glycosyl hydrolase 13 family. Requires Ca(2+) as cofactor.

It localises to the secreted. The catalysed reaction is Hydrolysis of pullulan to panose (6-alpha-D-glucosylmaltose).. Its function is as follows. Endohydrolysis of 1,4-alpha-glucosidic linkages in pullulan to form panose. Also hydrolyzes cyclodextrins. The sequence is that of Neopullulanase 1 (tvaI) from Thermoactinomyces vulgaris.